Consider the following 304-residue polypeptide: N-acetyllactosaminide alpha-2,3-sialyltransferase (304 aa).

CMP-N-acetyl-beta-neuraminate-binding positions include 221–225 (FPHPA), 242–243 (FE), and 262–263 (SS). The active-site Proton donor is the His223.

The protein belongs to the glycosyltransferase 52 family.

The enzyme catalyses a beta-D-galactosyl-(1-&gt;4)-N-acetyl-beta-D-glucosaminyl derivative + CMP-N-acetyl-beta-neuraminate = an N-acetyl-alpha-neuraminyl-(2-&gt;3)-beta-D-galactosyl-(1-&gt;4)-N-acetyl-beta-D-glucosaminyl derivative + CMP + H(+). The protein operates within bacterial outer membrane biogenesis; lipooligosaccharide biosynthesis. Functionally, catalyzes the transfer of sialic acid from the substrate CMP-N-acetylneuraminate to the terminal galactose residue of the N-acetyllactosamine moiety of surface lipooligosaccharide (LOS). Thus, functions in the sialylation of LOS, which plays a role in the evasion of the host immune response. This Haemophilus influenzae (strain ATCC 51907 / DSM 11121 / KW20 / Rd) protein is N-acetyllactosaminide alpha-2,3-sialyltransferase.